The chain runs to 196 residues: Large ribosomal subunit protein eL15 (196 aa).

Basic residues-rich tracts occupy residues 160-172 (ATRG…RKGR) and 186-196 (PSIRAHKSRGK). The tract at residues 160 to 196 (ATRGKTSAGRKGRGMSTRGKGTEKTRPSIRAHKSRGK) is disordered.

The protein belongs to the eukaryotic ribosomal protein eL15 family.

This chain is Large ribosomal subunit protein eL15 (rpl15e), found in Methanosarcina mazei (strain ATCC BAA-159 / DSM 3647 / Goe1 / Go1 / JCM 11833 / OCM 88) (Methanosarcina frisia).